The following is a 303-amino-acid chain: THAP domain-containing protein 11 (303 aa).

The THAP-type zinc finger occupies 6-64; it reads CCVPGCYNNSHRDKALHFYTFPKDAELRRLWLKNVSRAGVSGCFSTFQPTTGHRLCSVH. 2 disordered regions span residues 85–132 and 155–174; these read VNER…AQTT and SSQAPGTVPPVPTTPTGEDV. Residues 93-132 show a composition bias toward low complexity; that stretch reads RPAGAAAARRRQQQQQQQQQQQQQQQQQQPSPSASTAQTT. The HCFC1-binding motif (HBM) motif lies at 232–235; it reads DHSY. Positions 244 to 294 form a coiled coil; the sequence is EELLRKLNEQRDILALMEVKMKEMKGSIRHLRLTEAKLREELREKDRLLAM.

Belongs to the THAP11 family. As to quaternary structure, forms homodimers. Interacts via HBM with HCFC1. Forms a complex with HCFC1 and ZNF143.

The protein resides in the nucleus. It localises to the cytoplasm. Transcription factor, which has both transcriptional activation and repression activities. Also modulates chromatin accessibility. In complex with HCFC1 and ZNF143, regulates the expression of several genes, including AP2S1, ESCO2, OPHN1, RBL1, UBXN8 and ZNF32. May regulate the expression of genes that encode both cytoplasmic and mitochondrial ribosomal proteins. Required for normal mitochondrial development and function. Regulates mitochondrial gene expression, including that of components of the electron transport chain. Involved in the maintainance of pluripotency in early embryonic cells, possibly through its action on mitochondrial maturation which is required to meet high energy demands of these cells. Required for early development of retina, preventing premature exit of retinal progenitor cells from the cell cycle. This effect may also be mediated by its action on mitochondria. Through the regulation of MMACHC gene expression, controls cobalamin metabolism. Required for normal brain development and neural precursor differentiation. Involved in cell growth. This chain is THAP domain-containing protein 11 (THAP11), found in Bos taurus (Bovine).